A 202-amino-acid polypeptide reads, in one-letter code: Guanylate kinase (202 aa).

Positions 3–181 (GNLFIITAPS…ALEDLRAIIR (179 aa)) constitute a Guanylate kinase-like domain. An ATP-binding site is contributed by 10–17 (APSGAGKT).

It belongs to the guanylate kinase family.

The protein localises to the cytoplasm. The enzyme catalyses GMP + ATP = GDP + ADP. Essential for recycling GMP and indirectly, cGMP. This chain is Guanylate kinase, found in Methylobacillus flagellatus (strain ATCC 51484 / DSM 6875 / VKM B-1610 / KT).